The primary structure comprises 94 residues: PqqA binding protein (94 aa).

The protein belongs to the PqqD family. As to quaternary structure, monomer. Interacts with PqqE.

The protein operates within cofactor biosynthesis; pyrroloquinoline quinone biosynthesis. Functions as a PqqA binding protein and presents PqqA to PqqE, in the pyrroloquinoline quinone (PQQ) biosynthetic pathway. The protein is PqqA binding protein of Acinetobacter baumannii (strain AB307-0294).